The primary structure comprises 310 residues: Putative sugar kinase PH1459 (310 aa).

Residues K194, T219, and G224 each contribute to the ATP site.

The protein belongs to the carbohydrate kinase PfkB family.

This Pyrococcus horikoshii (strain ATCC 700860 / DSM 12428 / JCM 9974 / NBRC 100139 / OT-3) protein is Putative sugar kinase PH1459.